Reading from the N-terminus, the 506-residue chain is Cytochrome P450 monooxygenase atr2 (506 aa).

Residues 18-38 (VFAGLVLASLLTTTYCIWNIF) form a helical membrane-spanning segment. Cys451 is a heme binding site.

This sequence belongs to the cytochrome P450 family. Heme serves as cofactor.

It localises to the membrane. The enzyme catalyses 4-O-demethylbarbatate + reduced [NADPH--hemoprotein reductase] + O2 = proatranorin II + oxidized [NADPH--hemoprotein reductase] + H2O + H(+). It catalyses the reaction proatranorin II + reduced [NADPH--hemoprotein reductase] + O2 = proatranorin III + oxidized [NADPH--hemoprotein reductase] + 2 H2O + H(+). The catalysed reaction is proatranorin I + reduced [NADPH--hemoprotein reductase] + O2 = proatranorin IV + oxidized [NADPH--hemoprotein reductase] + H2O + H(+). It carries out the reaction proatranorin IV + reduced [NADPH--hemoprotein reductase] + O2 = atranorin + oxidized [NADPH--hemoprotein reductase] + 2 H2O + H(+). The protein operates within secondary metabolite biosynthesis; terpenoid biosynthesis. In terms of biological role, cytochrome P450 monooxygenase; part of the gene cluster that mediates the biosynthesis of atranorin, a depside of polyketide origin that accumulates in the cortical or medullary layers of lichen thalli. Atr2 performs the oxidation at the C-9 position of 4-O-demethylbarbatic acid to yield proatranorin III via proatranorin II. Atr2 is also able to oxidize the atr3 product proatranorin I to produce the final compound atranorin. The first step in the pathway is performed by the non-reducing polyketide synthase atr1 that produces 4-O-demethylbarbatic acid composed of two 3-methylorsellinic acid (3MOA) moieties. The pathway continues with the actions of the cytochrome P450 monooygenase atr2 that catalizes the oxidation of c-9 and the O-methyltransferase atr3 that performs the methylation of the carboxyl group to yield atranorin, via the proatranorin II and III intermediates if atr2 acts first, or the proatranorin I intermediate if atr3 acts first. This is Cytochrome P450 monooxygenase atr2 from Stereocaulon alpinum (Alpine snow lichen).